Reading from the N-terminus, the 192-residue chain is Potassium-transporting ATPase KdpC subunit (192 aa).

Residues 7–27 (PLIVIFAVLTAVTGLAYPAVM) form a helical membrane-spanning segment.

This sequence belongs to the KdpC family. As to quaternary structure, the system is composed of three essential subunits: KdpA, KdpB and KdpC.

It is found in the cell inner membrane. In terms of biological role, part of the high-affinity ATP-driven potassium transport (or Kdp) system, which catalyzes the hydrolysis of ATP coupled with the electrogenic transport of potassium into the cytoplasm. This subunit acts as a catalytic chaperone that increases the ATP-binding affinity of the ATP-hydrolyzing subunit KdpB by the formation of a transient KdpB/KdpC/ATP ternary complex. The protein is Potassium-transporting ATPase KdpC subunit of Paraburkholderia phytofirmans (strain DSM 17436 / LMG 22146 / PsJN) (Burkholderia phytofirmans).